The chain runs to 124 residues: Fluoride-specific ion channel FluC (124 aa).

4 helical membrane passes run 4–24, 32–52, 68–88, and 101–121; these read ILAI…LAGG, AFPW…GLIM, GLTI…YETF, and LNVL…IMAA. Residues Gly75 and Thr78 each contribute to the Na(+) site.

This sequence belongs to the fluoride channel Fluc/FEX (TC 1.A.43) family.

The protein resides in the cell inner membrane. The catalysed reaction is fluoride(in) = fluoride(out). Its activity is regulated as follows. Na(+) is not transported, but it plays an essential structural role and its presence is essential for fluoride channel function. Fluoride-specific ion channel. Important for reducing fluoride concentration in the cell, thus reducing its toxicity. The polypeptide is Fluoride-specific ion channel FluC (Geobacter sulfurreducens (strain ATCC 51573 / DSM 12127 / PCA)).